The chain runs to 284 residues: Pantothenate synthetase (284 aa).

Position 30 to 37 (30 to 37 (MGNLHDGH)) interacts with ATP. Histidine 37 (proton donor) is an active-site residue. Residue glutamine 61 participates in (R)-pantoate binding. Glutamine 61 lines the beta-alanine pocket. Residue 149 to 152 (GEKD) participates in ATP binding. Position 155 (glutamine 155) interacts with (R)-pantoate. ATP-binding positions include valine 178 and 186–189 (LSSR).

Belongs to the pantothenate synthetase family. As to quaternary structure, homodimer.

Its subcellular location is the cytoplasm. It catalyses the reaction (R)-pantoate + beta-alanine + ATP = (R)-pantothenate + AMP + diphosphate + H(+). Its pathway is cofactor biosynthesis; (R)-pantothenate biosynthesis; (R)-pantothenate from (R)-pantoate and beta-alanine: step 1/1. In terms of biological role, catalyzes the condensation of pantoate with beta-alanine in an ATP-dependent reaction via a pantoyl-adenylate intermediate. This chain is Pantothenate synthetase, found in Erwinia tasmaniensis (strain DSM 17950 / CFBP 7177 / CIP 109463 / NCPPB 4357 / Et1/99).